The primary structure comprises 201 residues: Pyridoxal 5'-phosphate synthase subunit PdxT (201 aa).

Position 48-50 (48-50) interacts with L-glutamine; it reads GES. Cysteine 80 (nucleophile) is an active-site residue. L-glutamine-binding positions include arginine 109 and 137–138; that span reads IR. Catalysis depends on charge relay system residues histidine 180 and glutamate 182.

The protein belongs to the glutaminase PdxT/SNO family. In terms of assembly, in the presence of PdxS, forms a dodecamer of heterodimers. Only shows activity in the heterodimer.

It carries out the reaction aldehydo-D-ribose 5-phosphate + D-glyceraldehyde 3-phosphate + L-glutamine = pyridoxal 5'-phosphate + L-glutamate + phosphate + 3 H2O + H(+). It catalyses the reaction L-glutamine + H2O = L-glutamate + NH4(+). The protein operates within cofactor biosynthesis; pyridoxal 5'-phosphate biosynthesis. In terms of biological role, catalyzes the hydrolysis of glutamine to glutamate and ammonia as part of the biosynthesis of pyridoxal 5'-phosphate. The resulting ammonia molecule is channeled to the active site of PdxS. The protein is Pyridoxal 5'-phosphate synthase subunit PdxT of Cutibacterium acnes (strain DSM 16379 / KPA171202) (Propionibacterium acnes).